The sequence spans 569 residues: Myotubularin-related protein 9 (569 aa).

In terms of domain architecture, Myotubularin phosphatase spans 134–513 (GWSAFDLEQE…QCIKIWDRLF (380 aa)).

Belongs to the protein-tyrosine phosphatase family. Non-receptor class myotubularin subfamily. Heterodimer with lipid phosphatase mtm-6.

The protein localises to the cytoplasm. Its subcellular location is the membrane. May act as a regulatory subunit for mtm-6. In association with phosphatase mtm-6, plays a role in endosome trafficking probably by regulating phosphatidylinositol-3-phosphate levels. Regulates fluid phase endocytosis in coelomocytes. Regulates posterior migration of QL neuroblast descendants and the anterior migration of QR neuroblast descendants and HSN neurons during larval development probably by controlling Wnt ligand secretion through the regulation of sorting receptor mig-14 trafficking. Involved in the formation of correct synapse number in DA9 motor neurons. This is Myotubularin-related protein 9 from Caenorhabditis elegans.